The chain runs to 301 residues: GTP cyclohydrolase FolE2 (301 aa).

It belongs to the GTP cyclohydrolase IV family.

The catalysed reaction is GTP + H2O = 7,8-dihydroneopterin 3'-triphosphate + formate + H(+). The protein operates within cofactor biosynthesis; 7,8-dihydroneopterin triphosphate biosynthesis; 7,8-dihydroneopterin triphosphate from GTP: step 1/1. Its function is as follows. Converts GTP to 7,8-dihydroneopterin triphosphate. The polypeptide is GTP cyclohydrolase FolE2 (Pseudomonas syringae pv. tomato (strain ATCC BAA-871 / DC3000)).